The primary structure comprises 589 residues: L-fucose isomerase (589 aa).

Residues Glu-340 and Asp-364 each act as proton acceptor in the active site. The Mn(2+) site is built by Glu-340, Asp-364, and His-527.

This sequence belongs to the L-fucose isomerase family. Requires Mn(2+) as cofactor.

It localises to the cytoplasm. It carries out the reaction L-fucose = L-fuculose. It functions in the pathway carbohydrate degradation; L-fucose degradation; L-lactaldehyde and glycerone phosphate from L-fucose: step 1/3. Functionally, converts the aldose L-fucose into the corresponding ketose L-fuculose. The protein is L-fucose isomerase of Haemophilus influenzae (strain ATCC 51907 / DSM 11121 / KW20 / Rd).